We begin with the raw amino-acid sequence, 380 residues long: Probable dual-specificity RNA methyltransferase RlmN (380 aa).

Residue E123 is the Proton acceptor of the active site. Residues 129-362 (HEYGNSVCVT…VTIRREQGSD (234 aa)) enclose the Radical SAM core domain. C136 and C367 are joined by a disulfide. 3 residues coordinate [4Fe-4S] cluster: C143, C147, and C150. S-adenosyl-L-methionine is bound by residues 193 to 194 (GE), S225, 248 to 250 (SLH), and N324. The S-methylcysteine intermediate role is filled by C367.

It belongs to the radical SAM superfamily. RlmN family. It depends on [4Fe-4S] cluster as a cofactor.

It is found in the cytoplasm. The enzyme catalyses adenosine(2503) in 23S rRNA + 2 reduced [2Fe-2S]-[ferredoxin] + 2 S-adenosyl-L-methionine = 2-methyladenosine(2503) in 23S rRNA + 5'-deoxyadenosine + L-methionine + 2 oxidized [2Fe-2S]-[ferredoxin] + S-adenosyl-L-homocysteine. It catalyses the reaction adenosine(37) in tRNA + 2 reduced [2Fe-2S]-[ferredoxin] + 2 S-adenosyl-L-methionine = 2-methyladenosine(37) in tRNA + 5'-deoxyadenosine + L-methionine + 2 oxidized [2Fe-2S]-[ferredoxin] + S-adenosyl-L-homocysteine. Functionally, specifically methylates position 2 of adenine 2503 in 23S rRNA and position 2 of adenine 37 in tRNAs. The polypeptide is Probable dual-specificity RNA methyltransferase RlmN (Lysinibacillus sphaericus (strain C3-41)).